Consider the following 295-residue polypeptide: Lipoyl synthase (295 aa).

[4Fe-4S] cluster-binding residues include Cys-34, Cys-39, Cys-45, Cys-60, Cys-64, Cys-67, and Ser-273. The 217-residue stretch at 46–262 (WNKRHATIMV…KRMAYAKGFS (217 aa)) folds into the Radical SAM core domain.

This sequence belongs to the radical SAM superfamily. Lipoyl synthase family. Requires [4Fe-4S] cluster as cofactor.

The protein localises to the cytoplasm. The enzyme catalyses [[Fe-S] cluster scaffold protein carrying a second [4Fe-4S](2+) cluster] + N(6)-octanoyl-L-lysyl-[protein] + 2 oxidized [2Fe-2S]-[ferredoxin] + 2 S-adenosyl-L-methionine + 4 H(+) = [[Fe-S] cluster scaffold protein] + N(6)-[(R)-dihydrolipoyl]-L-lysyl-[protein] + 4 Fe(3+) + 2 hydrogen sulfide + 2 5'-deoxyadenosine + 2 L-methionine + 2 reduced [2Fe-2S]-[ferredoxin]. The protein operates within protein modification; protein lipoylation via endogenous pathway; protein N(6)-(lipoyl)lysine from octanoyl-[acyl-carrier-protein]: step 2/2. Functionally, catalyzes the radical-mediated insertion of two sulfur atoms into the C-6 and C-8 positions of the octanoyl moiety bound to the lipoyl domains of lipoate-dependent enzymes, thereby converting the octanoylated domains into lipoylated derivatives. The chain is Lipoyl synthase from Anaplasma phagocytophilum (strain HZ).